We begin with the raw amino-acid sequence, 245 residues long: 1-(5-phosphoribosyl)-5-[(5-phosphoribosylamino)methylideneamino] imidazole-4-carboxamide isomerase (245 aa).

The Proton acceptor role is filled by Asp10. The active-site Proton donor is the Asp135.

Belongs to the HisA/HisF family.

Its subcellular location is the cytoplasm. The enzyme catalyses 1-(5-phospho-beta-D-ribosyl)-5-[(5-phospho-beta-D-ribosylamino)methylideneamino]imidazole-4-carboxamide = 5-[(5-phospho-1-deoxy-D-ribulos-1-ylimino)methylamino]-1-(5-phospho-beta-D-ribosyl)imidazole-4-carboxamide. It functions in the pathway amino-acid biosynthesis; L-histidine biosynthesis; L-histidine from 5-phospho-alpha-D-ribose 1-diphosphate: step 4/9. In Methanosarcina acetivorans (strain ATCC 35395 / DSM 2834 / JCM 12185 / C2A), this protein is 1-(5-phosphoribosyl)-5-[(5-phosphoribosylamino)methylideneamino] imidazole-4-carboxamide isomerase.